Consider the following 145-residue polypeptide: MTIDITEIMDLIPHRYPFLLVDKVVEIDPNKSITGIKNVTVNEPQFTGHFPARPVMPGVLMVEAMTQLAAILVAKSLGSTKNKEVFLMAIENSKFRKVVQPGDTMHIHATIDQQRANVWKFSSTVKVDGEMAAESKFTAMIKDKS.

The active site involves H49.

Belongs to the thioester dehydratase family. FabZ subfamily.

It is found in the cytoplasm. It catalyses the reaction a (3R)-hydroxyacyl-[ACP] = a (2E)-enoyl-[ACP] + H2O. Functionally, involved in unsaturated fatty acids biosynthesis. Catalyzes the dehydration of short chain beta-hydroxyacyl-ACPs and long chain saturated and unsaturated beta-hydroxyacyl-ACPs. This Rickettsia bellii (strain OSU 85-389) protein is 3-hydroxyacyl-[acyl-carrier-protein] dehydratase FabZ.